A 261-amino-acid polypeptide reads, in one-letter code: MLTCNDKINPKTLLEEIMALRPWRKGPFEISQIKIDSEWDSSIKWDLVKNATLLKDKVVADVGCNNGYYLFKMLEHGPKSLVGFDPGVLVKKQFEFLAPFFDKEKKIIYESLGVEDLHEKYPNAFDVIFCLGVLYHRKSPLEALKALYHALKIKGELVLDTLIIDSPLDIALCPKKTYAKMKNVYFIPSVSALKGWCERVGFENFEILSVLKTTPKEQRKTDFILGQSLEDFLDETDHSKTLEGYDAPLRGYFKMLKPSKR.

Residues lysine 25, tryptophan 39, lysine 44, glycine 63, 114-115 (VE), tyrosine 135, and arginine 250 each bind carboxy-S-adenosyl-L-methionine.

It belongs to the class I-like SAM-binding methyltransferase superfamily. CmoB family. Homotetramer.

It carries out the reaction carboxy-S-adenosyl-L-methionine + 5-hydroxyuridine(34) in tRNA = 5-carboxymethoxyuridine(34) in tRNA + S-adenosyl-L-homocysteine + H(+). Catalyzes carboxymethyl transfer from carboxy-S-adenosyl-L-methionine (Cx-SAM) to 5-hydroxyuridine (ho5U) to form 5-carboxymethoxyuridine (cmo5U) at position 34 in tRNAs. This chain is tRNA U34 carboxymethyltransferase, found in Helicobacter pylori (strain HPAG1).